Here is a 477-residue protein sequence, read N- to C-terminus: Multidrug resistance protein PmpM (477 aa).

The next 12 membrane-spanning stretches (helical) occupy residues 21–41, 56–76, 104–124, 133–153, 171–191, 202–222, 253–273, 286–306, 326–346, 360–380, 398–418, and 431–451; these read LLTL…MGFV, AVAL…GTLL, LALL…EPIL, LIGP…AAAL, MVLG…LIYG, GCGW…LFWV, LPIG…ALLI, IALN…MAVT, GVGM…MLLL, VIAI…SDAL, MIMT…SLGL, and LWQG…IRLA.

It belongs to the multi antimicrobial extrusion (MATE) (TC 2.A.66.1) family.

The protein resides in the cell inner membrane. Its function is as follows. Multidrug efflux pump that functions as an H(+)/drug antiporter. Confers resistance to benzalkonium chloride, fluoroquinolones, ethidium bromide, acriflavine and tetraphenylphosphonium chloride. The protein is Multidrug resistance protein PmpM (pmpM) of Pseudomonas aeruginosa (strain ATCC 15692 / DSM 22644 / CIP 104116 / JCM 14847 / LMG 12228 / 1C / PRS 101 / PAO1).